The sequence spans 374 residues: MRSGRYIGVMSGTSLDGVDVVLAAIDENMVAQQASLSWPIPVELKQAVLDICQGQQLTLSQFGQLDTRLGILFADAVNGLLAQENLQPQDIVAIGCHGQTVWHEPQGPAPHTLQIGDNNQIVARTGITVVGDFRRRDIALGGQGAPLVPAFHHALLAHPTERRMVLNIGGIANLSMLLPGQPVRGYDTGPGNMLMDAWIWRQCAKPYDKDAQWACEGNVVLPLLQQMLNDPYFAAPAPKSTGREYFNYGWLERHLQKFPGLRSRDVQATLAELTAVTISEQVLLSGGCDRLMVCGGGSRNPLVMARLAGLLPGTEVTTTDTAGISGDDMEALAFAWLAWRTLAGLAGNLPSVTGASEATVLGAIFPANPPRTQS.

12-19 (GTSLDGVD) lines the ATP pocket.

This sequence belongs to the anhydro-N-acetylmuramic acid kinase family.

The enzyme catalyses 1,6-anhydro-N-acetyl-beta-muramate + ATP + H2O = N-acetyl-D-muramate 6-phosphate + ADP + H(+). It functions in the pathway amino-sugar metabolism; 1,6-anhydro-N-acetylmuramate degradation. The protein operates within cell wall biogenesis; peptidoglycan recycling. In terms of biological role, catalyzes the specific phosphorylation of 1,6-anhydro-N-acetylmuramic acid (anhMurNAc) with the simultaneous cleavage of the 1,6-anhydro ring, generating MurNAc-6-P. Is required for the utilization of anhMurNAc either imported from the medium or derived from its own cell wall murein, and thus plays a role in cell wall recycling. This is Anhydro-N-acetylmuramic acid kinase from Escherichia fergusonii (strain ATCC 35469 / DSM 13698 / CCUG 18766 / IAM 14443 / JCM 21226 / LMG 7866 / NBRC 102419 / NCTC 12128 / CDC 0568-73).